The sequence spans 135 residues: Large ribosomal subunit protein uL16c (135 aa).

The protein belongs to the universal ribosomal protein uL16 family. Part of the 50S ribosomal subunit.

It is found in the plastid. The protein localises to the chloroplast. The sequence is that of Large ribosomal subunit protein uL16c from Lotus japonicus (Lotus corniculatus var. japonicus).